A 284-amino-acid chain; its full sequence is D-tagatose-1,6-bisphosphate aldolase subunit GatY (284 aa).

Catalysis depends on Asp82, which acts as the Proton donor. 2 residues coordinate Zn(2+): His83 and His180. Gly181 serves as a coordination point for dihydroxyacetone phosphate. Zn(2+) is bound at residue His208. Residues 209 to 211 and 230 to 233 contribute to the dihydroxyacetone phosphate site; these read GAS and NVAT.

Belongs to the class II fructose-bisphosphate aldolase family. TagBP aldolase GatY subfamily. In terms of assembly, forms a complex with GatZ. Requires Zn(2+) as cofactor.

It carries out the reaction D-tagatofuranose 1,6-bisphosphate = D-glyceraldehyde 3-phosphate + dihydroxyacetone phosphate. Its pathway is carbohydrate metabolism; D-tagatose 6-phosphate degradation; D-glyceraldehyde 3-phosphate and glycerone phosphate from D-tagatose 6-phosphate: step 2/2. Functionally, catalytic subunit of the tagatose-1,6-bisphosphate aldolase GatYZ, which catalyzes the reversible aldol condensation of dihydroxyacetone phosphate (DHAP or glycerone-phosphate) with glyceraldehyde 3-phosphate (G3P) to produce tagatose 1,6-bisphosphate (TBP). Requires GatZ subunit for full activity and stability. Is involved in the catabolism of galactitol. In Salmonella typhi, this protein is D-tagatose-1,6-bisphosphate aldolase subunit GatY.